The following is a 287-amino-acid chain: (S)-phenoxypropionate/alpha-ketoglutarate-dioxygenase (287 aa).

Residues histidine 102 and aspartate 104 each contribute to the Fe cation site. Positions 129 and 242 each coordinate 2-oxoglutarate. Fe cation is bound at residue histidine 257. Residue arginine 268 participates in 2-oxoglutarate binding.

It belongs to the TfdA dioxygenase family. In terms of assembly, monomer. The cofactor is Fe cation. L-ascorbate serves as cofactor.

The catalysed reaction is (S)-2-(4-chloro-2-methylphenoxy)propanoate + 2-oxoglutarate + O2 = 2-methyl-4-chlorophenol + pyruvate + succinate + CO2. The enzyme catalyses (S)-(2,4-dichlorophenoxy)propanoate + 2-oxoglutarate + O2 = 2,4-dichlorophenol + pyruvate + succinate + CO2. It participates in xenobiotic degradation; 2-(2,4-dichlorophenoxy)propanoate degradation. Functionally, involved in the degradation of the phenoxypropionate herbicides. Catalyzes the enantiospecific cleavage of the ether bond in the herbicid S-dichlorprop ((S)-2-(2,4-dichlorophenoxy)propionate)(S-2,4-DP) and S-mecoprop ((S)-2-(4-chloro-2-methylphenoxy)propionate)(S-2,4-MCPP). It can also accept (RS)-2-(4-chloro-2-methylphenoxy)propionate ((RS)-2,4-MCPP) and phenoxyacetate derivatives such as 2,4-dichlorophenoxyacetate (2,4-D), however it can only accept 2-oxoglutarate as oxygen acceptor. The polypeptide is (S)-phenoxypropionate/alpha-ketoglutarate-dioxygenase (Sphingobium herbicidovorans (strain ATCC 700291 / DSM 11019 / CCUG 56400 / KCTC 2939 / LMG 18315 / NBRC 16415 / MH) (Sphingomonas herbicidovorans)).